The chain runs to 937 residues: Protocadherin alpha-7 (937 aa).

A signal peptide spans 1-29; it reads MVCPNGYDPGGRHLLLFIIILAAWEAGRG. Cadherin domains follow at residues 30 to 133, 134 to 242, 243 to 350, 351 to 455, 456 to 565, and 581 to 678; these read QLHY…PPVF, PATQ…APVF, DRTL…APQL, TLTS…APAF, AQPE…APAL, and VPRS…APKA. Over 30-697 the chain is Extracellular; the sequence is QLHYSVPEEA…GPETELVDVN (668 aa). A disulfide bridge links cysteine 96 with cysteine 102. Residues asparagine 254 and asparagine 265 are each glycosylated (N-linked (GlcNAc...) asparagine). An N-linked (GlcNAc...) asparagine glycan is attached at asparagine 548. A helical transmembrane segment spans residues 698-718; sequence VYLIIAICAVSSLLVLTLLLY. At 719–937 the chain is on the cytoplasmic side; the sequence is TALRCSAPSS…GNSTTDNSDQ (219 aa). Disordered stretches follow at residues 755–795 and 814–937; these read RQRV…DWRY and ILRA…NSDQ. PXXP repeat units lie at residues 774–777, 786–789, 819–822, 860–863, and 878–881; these read PSLP, PRQP, PGGP, PGNP, and PGSP. The interval 774–881 is 5 X 4 AA repeats of P-X-X-P; the sequence is PSLPQGPSST…PDKFIIPGSP (108 aa). Residues 775–787 show a composition bias toward polar residues; that stretch reads SLPQGPSSTDNPR. Basic and acidic residues predominate over residues 896–910; that stretch reads DKSDFITFGKKEETK.

Forms homodimers in trans (molecules expressed by two different cells). Forms promiscuous heterodimers in cis (at the plasma membrane of the same cell) with other protocadherins.

It is found in the cell membrane. In terms of biological role, calcium-dependent cell-adhesion protein involved in cells self-recognition and non-self discrimination. Thereby, it is involved in the establishment and maintenance of specific neuronal connections in the brain. In Homo sapiens (Human), this protein is Protocadherin alpha-7.